A 645-amino-acid polypeptide reads, in one-letter code: Minor extracellular protease Epr (645 aa).

A signal peptide spans 1 to 27; the sequence is MKNMSCKLVVSVTLFFSFLTIGPLAHA. The propeptide occupies 28 to 103; it reads QNSSEKEVIV…AADSTDFKVL (76 aa). In terms of domain architecture, Peptidase S8 spans 115 to 382; it reads QWNLEPIQVK…YGLIQYKAQA (268 aa). Active-site charge relay system residues include D142, H172, and S326. 2 disordered regions span residues 490–577 and 591–645; these read KQAK…KTAL and AEAK…KPKK. Positions 491 to 508 are enriched in basic and acidic residues; the sequence is QAKDKVAKAEKSKKKTDV. The segment covering 522–547 has biased composition (polar residues); that stretch reads SEKTSLQKRLNKVKSTNLKTAQQSVS. Residues 592-610 show a composition bias toward basic and acidic residues; the sequence is EAKKVETAKAKVKKAEKDK.

This sequence belongs to the peptidase S8 family. In terms of processing, may undergo two steps of processing in its passage through the cell membrane: removal of the N-terminal signal sequence and cleavage of the C-terminal domain. Several active forms of Epr with molecular masses between 40 and 34 kDa were found in the medium of B.subtilis cultures. The size variation of the active forms expressed by the complete epr gene appears to be the result of partial removal of the C-terminus either by processing or degradation.

The protein localises to the secreted. The protein resides in the cell wall. With respect to regulation, requires Ca(2+) for stability. Activity is inhibited by phenylmethylsulfonyl fluoride (PMSF) and EDTA. Its function is as follows. Serine protease. Involved in the production of the competence and sporulation stimulating factor CSF. In addition, is essential for swarming motility. Plays a key role in DegU-mediated swarming motility. The protease activity is dispensable for swarming. Not essential for growth or sporulation. This Bacillus subtilis (strain 168) protein is Minor extracellular protease Epr.